Consider the following 403-residue polypeptide: Phosphoglycerate kinase (403 aa).

Residues 21–23 (DFN), Arg36, 59–62 (HLGR), Arg119, and Arg154 each bind substrate. ATP-binding positions include Lys207, Gly299, Glu330, and 357 to 360 (GGDA).

This sequence belongs to the phosphoglycerate kinase family. Monomer.

It is found in the cytoplasm. The catalysed reaction is (2R)-3-phosphoglycerate + ATP = (2R)-3-phospho-glyceroyl phosphate + ADP. It participates in carbohydrate degradation; glycolysis; pyruvate from D-glyceraldehyde 3-phosphate: step 2/5. The polypeptide is Phosphoglycerate kinase (Chlamydia abortus (strain DSM 27085 / S26/3) (Chlamydophila abortus)).